The chain runs to 290 residues: 7-methylguanosine phosphate-specific 5'-nucleotidase A (290 aa).

Aspartate 39 acts as the Nucleophile in catalysis. 2 residues coordinate Mg(2+): aspartate 39 and aspartate 41. The Proton donor role is filled by aspartate 41. Position 86 (glutamate 86) interacts with CMP. A N(7)-methyl-GMP-binding site is contributed by glutamate 86. Residues 154–155 (SA) and lysine 203 contribute to the substrate site. Mg(2+) is bound at residue aspartate 228.

This sequence belongs to the pyrimidine 5'-nucleotidase family. Monomer.

The protein localises to the cytoplasm. The enzyme catalyses N(7)-methyl-GMP + H2O = N(7)-methylguanosine + phosphate. The catalysed reaction is CMP + H2O = cytidine + phosphate. It catalyses the reaction a ribonucleoside 5'-phosphate + H2O = a ribonucleoside + phosphate. Specifically hydrolyzes 7-methylguanosine monophosphate (m(7)GMP) to 7-methylguanosine and inorganic phosphate. The specific activity for m(7)GMP may protect cells against undesired salvage of m(7)GMP and its incorporation into nucleic acids. Also has weak activity for CMP. UMP and purine nucleotides are poor substrates. This is 7-methylguanosine phosphate-specific 5'-nucleotidase A (Nt5c3b-a) from Xenopus laevis (African clawed frog).